A 610-amino-acid chain; its full sequence is Oxidoreductase ptaE (610 aa).

Positions 1-20 are cleaved as a signal peptide; that stretch reads MFQSILFLAFYGRPVFGSAA. Plastocyanin-like domains follow at residues 67-181 and 191-344; these read QIIS…HGPS and PWLL…IVRY. Residues N105, N111, N262, N277, N330, N356, N401, N409, N427, and N602 are each glycosylated (N-linked (GlcNAc...) asparagine). In terms of domain architecture, Plastocyanin-like 3 spans 425–568; sequence YVNWSEPSVK…IAIQFLEQPS (144 aa).

This sequence belongs to the multicopper oxidase family.

It functions in the pathway secondary metabolite biosynthesis. Functionally, oxidoreductase; part of the gene cluster that mediates the biosynthesis of pestheic acid, a diphenyl ether which is a biosynthetic precursor of the unique chloropupukeananes. The biosynthesis initiates from condensation of acetate and malonate units catalyzed by the non-reducing PKS ptaA. As the ptaA protein is TE/CLC domain-deficient, hydrolysis and Claisen cyclization of the polyketide could be catalyzed by ptaB containing a beta-lactamase domain. The ptaB protein might hydrolyze the thioester bond between the ACP of ptaA and the intermediate to release atrochrysone carboxylic acid, which is spontaneously dehydrated to form endocrocin anthrone. Endocrocin anthrone is then converted to endocrocin, catalyzed by the anthrone oxygenase ptaC. Spontaneous decarboxylation of endocrocin occurs to generate emodin. An O-methyltransferase (ptaH or ptaI) could methylate emodin to form physcion. PtaJ could then catalyze the oxidative cleavage of physcion, and rotation of the intermediate could then afford desmethylisosulochrin. PtaF, a putative NADH-dependent oxidoreductase, might also participate in the oxidative cleavage step. Desmethylisosulochrin is then transformed by another O-methyltransferase (ptaH or ptaI) to form isosulochrin. Chlorination of isosulochrin by ptaM in the cyclohexadienone B ring then produces chloroisosulochrin. PtaE is responsible for the oxidative coupling reactions of both benzophenones isosulouchrin and chloroisosulochrin to RES-1214-1 and pestheic acid respectively, regardless of chlorination. In Pestalotiopsis fici (strain W106-1 / CGMCC3.15140), this protein is Oxidoreductase ptaE.